Reading from the N-terminus, the 136-residue chain is Small ribosomal subunit protein uS8c (136 aa).

The protein belongs to the universal ribosomal protein uS8 family. Part of the 30S ribosomal subunit.

It is found in the plastid. The protein resides in the chloroplast. One of the primary rRNA binding proteins, it binds directly to 16S rRNA central domain where it helps coordinate assembly of the platform of the 30S subunit. In Morus indica (Mulberry), this protein is Small ribosomal subunit protein uS8c (rps8).